Consider the following 269-residue polypeptide: 5'-nucleotidase SurE (269 aa).

The a divalent metal cation site is built by Asp-8, Asp-9, Ser-40, and Asn-93.

It belongs to the SurE nucleotidase family. It depends on a divalent metal cation as a cofactor.

The protein localises to the cytoplasm. The enzyme catalyses a ribonucleoside 5'-phosphate + H2O = a ribonucleoside + phosphate. Functionally, nucleotidase that shows phosphatase activity on nucleoside 5'-monophosphates. The protein is 5'-nucleotidase SurE of Caulobacter sp. (strain K31).